The sequence spans 152 residues: Interleukin-3 (152 aa).

Positions Met-1–Gln-19 are cleaved as a signal peptide. Asn-34 and Asn-89 each carry an N-linked (GlcNAc...) asparagine glycan. An intrachain disulfide couples Cys-35 to Cys-103.

The protein belongs to the IL-3 family. Monomer. Activated T-cells, mast cells, natural killer cells.

Its subcellular location is the secreted. Its function is as follows. Granulocyte/macrophage colony-stimulating factors are cytokines that act in hematopoiesis by controlling the production, differentiation, and function of 2 related white cell populations of the blood, the granulocytes and the monocytes-macrophages. In terms of biological role, this CSF induces granulocytes, macrophages, mast cells, stem cells, erythroid cells, eosinophils and megakaryocytes. In Hylobates lar (Lar gibbon), this protein is Interleukin-3 (IL3).